The sequence spans 488 residues: Protein nucleotidyltransferase YdiU (488 aa).

The ATP site is built by glycine 91, glycine 93, arginine 94, lysine 114, aspartate 126, glycine 127, arginine 177, and arginine 184. Aspartate 253 functions as the Proton acceptor in the catalytic mechanism. Mg(2+) contacts are provided by asparagine 254 and aspartate 263. An ATP-binding site is contributed by aspartate 263.

This sequence belongs to the SELO family. It depends on Mg(2+) as a cofactor. Mn(2+) serves as cofactor.

The catalysed reaction is L-seryl-[protein] + ATP = 3-O-(5'-adenylyl)-L-seryl-[protein] + diphosphate. It catalyses the reaction L-threonyl-[protein] + ATP = 3-O-(5'-adenylyl)-L-threonyl-[protein] + diphosphate. The enzyme catalyses L-tyrosyl-[protein] + ATP = O-(5'-adenylyl)-L-tyrosyl-[protein] + diphosphate. It carries out the reaction L-histidyl-[protein] + UTP = N(tele)-(5'-uridylyl)-L-histidyl-[protein] + diphosphate. The catalysed reaction is L-seryl-[protein] + UTP = O-(5'-uridylyl)-L-seryl-[protein] + diphosphate. It catalyses the reaction L-tyrosyl-[protein] + UTP = O-(5'-uridylyl)-L-tyrosyl-[protein] + diphosphate. In terms of biological role, nucleotidyltransferase involved in the post-translational modification of proteins. It can catalyze the addition of adenosine monophosphate (AMP) or uridine monophosphate (UMP) to a protein, resulting in modifications known as AMPylation and UMPylation. This is Protein nucleotidyltransferase YdiU from Bacillus thuringiensis (strain Al Hakam).